The following is a 963-amino-acid chain: MDSPSAGYTFEYLIETLNGSSQKKFFNVPKLGGTKYDILPYSIRVLLEAAVRNCDGFLMKKEDVINILDWKTKQSNVEVPFFPARVVLQDFTGIPAMVDFAAMREAVKTLGGDPKKVHPACPTDLTVDHSLQIDFSKCAIQNAPNPGGGDLQKAGKLSPLKVQPKKLPCRGQTTCRGSCDSGELSRNSGTFSSQIENTPVLCPFHLQPVPEPETVLKNQEVEFGRNRERLQFFKWSSGAFKNVAVIPPGTGMAHQVNLEHLSRVVFEEADLLFPDSVIGTDSHITMVNGLGILGWGVGGIETEAVMLGLPVTLTLPEVVGCELTGSSNAFVTSIDIVLGITKHLRQVGVAGKFVEFFGSGVSQLSIVDRTTIANMCPEYGAILSFFPVDNVTLRHLEHTGFDKTKLESMEEYLKAVKLFRNDENSSEPEYSQVIQINLNSIVASVSGPKRPQDRVAVTDMKSDFQACLNEKVGFKGFQVAAEKQSDTVSVRYDGSEYKLSHGSVVIAAVISCTNNCNPSVMLAAGLLAKKAVETGLRVKPYIRTSLSPGSGMVTHYLSSSGVLPYLSKLGFEIVGYGCSTCVGNTAPLSEAILNAVKQGDLVTCGVLSGNKNFEGRLCDCVRANYLASPPLVVAYAIAGTVNIDFQTEPLGTDSTGKNIYLHDIWPSREEVHQIEEEHVILSMFKALKEKVEMGNKRWNSLDAPDSVLFPWDVKSTYIRCPSFFDKLTKEPAASQPIENAHVLLYLGDSVTTDHISPAGSIARSSAAAKYLTNRGLTPREFNSYGARRGNDAVMTRGTFANIKLFNKFIGKPAPKTIHFPSGQTLDVFEAAELYQKEGIPLIILAGKKYGSGNSRDWAAKGPYLLGVKAVLAESYEKIHKDHLIGIGIAPLEFLPGENADSLGLSGREVFSLSFPEELFPGITLNIKTSTGKEFSVIAAFENDVEITLYKHGGLLNFVARKFL.

[4Fe-4S] cluster is bound by residues Cys512, Cys578, and Cys581.

This sequence belongs to the aconitase/IPM isomerase family. In terms of assembly, interacts with RBCK1 only in iron-rich conditions. Interacts (when associated with the 4Fe-4S) with FBXL5. Interacts with CIAO1 and CIAO2A. [4Fe-4S] cluster is required as a cofactor. Post-translationally, ubiquitinated and degraded by the proteasome in presence of high level of iron and oxygen. Ubiquitinated by a SCF complex containing FBXL5. Upon iron and oxygen depletion FBXL5 is degraded, preventing ubiquitination and allowing its RNA-binding activity. Ubiquitously expressed in rat tissues, the highest amounts present in skeletal muscle and heart.

It is found in the cytoplasm. In terms of biological role, RNA-binding protein that binds to iron-responsive elements (IRES), which are stem-loop structures found in the 5'-UTR of ferritin, and delta aminolevulinic acid synthase mRNAs, and in the 3'-UTR of transferrin receptor mRNA. Binding to the IRE element in ferritin results in the repression of its mRNA translation. Binding of the protein to the transferrin receptor mRNA inhibits the degradation of this otherwise rapidly degraded mRNA. This is Iron-responsive element-binding protein 2 (Ireb2) from Rattus norvegicus (Rat).